Reading from the N-terminus, the 74-residue chain is Antimicrobial peptide ToAp1 (74 aa).

Residues 1–22 (MQMKYLIPIFFLVLIVADHCHA) form the signal peptide. Lysine 39 carries the post-translational modification Lysine amide. The propeptide occupies 40-74 (GRRKRDITAQIEQYRNIQKREAAELEELLANLPVY).

It belongs to the non-disulfide-bridged peptide (NDBP) superfamily. Short antimicrobial peptide (group 4) family. Expressed by the venom gland.

The protein resides in the secreted. Its function is as follows. Antimicrobial peptide. Is able to kill Mycobacterium abscessus subsp. massiliense in a dose-dependent manner. Has antifungal activity against Candida spp. and one Cryptococcus neoformans strains with MICs values ranging from 12.5 to 200 uM. Also shows an inhibitory activity on C.albicans biofilms at high concentrations. Shows low cytotoxic activity and has weak hemolytic activity on human erythrocytes. Shows anti-inflammatory activities, since it decreases release of pro-inflammatory cytokines, and increases release of anti-inflammatory cytokines. Acts by blocking the Toll-like receptor 4 (TLR4). In addition, decreases the expression of costimulatory molecules such as CD80 and CD86 in LPS-stimulated cells. In vivo, does not induce immune cell migration. Helical wheel projections predict an amphipathic peptide with distinct hydrophobic and hydrophilic faces. The chain is Antimicrobial peptide ToAp1 from Tityus obscurus (Amazonian scorpion).